The chain runs to 342 residues: Delta-aminolevulinic acid dehydratase (342 aa).

Residues C133, C135, and C143 each contribute to the Zn(2+) site. The Schiff-base intermediate with substrate role is filled by K210. Residues R220 and R232 each coordinate 5-aminolevulinate. S254 is modified (phosphoserine). The Schiff-base intermediate with substrate role is filled by K263. Residues S290 and Y329 each coordinate 5-aminolevulinate.

Belongs to the ALAD family. Homooctamer. Zn(2+) is required as a cofactor.

The catalysed reaction is 2 5-aminolevulinate = porphobilinogen + 2 H2O + H(+). Its pathway is porphyrin-containing compound metabolism; protoporphyrin-IX biosynthesis; coproporphyrinogen-III from 5-aminolevulinate: step 1/4. With respect to regulation, inhibited by divalent lead ions. Its function is as follows. Catalyzes an early step in the biosynthesis of tetrapyrroles. Binds two molecules of 5-aminolevulinate per subunit, each at a distinct site, and catalyzes their condensation to form porphobilinogen. The chain is Delta-aminolevulinic acid dehydratase (HEM2) from Saccharomyces cerevisiae (strain ATCC 204508 / S288c) (Baker's yeast).